Consider the following 194-residue polypeptide: Fe/S biogenesis protein NfuA (194 aa).

Positions 151 and 154 each coordinate [4Fe-4S] cluster.

Belongs to the NfuA family. Homodimer. Requires [4Fe-4S] cluster as cofactor.

Functionally, involved in iron-sulfur cluster biogenesis. Binds a 4Fe-4S cluster, can transfer this cluster to apoproteins, and thereby intervenes in the maturation of Fe/S proteins. Could also act as a scaffold/chaperone for damaged Fe/S proteins. In Pasteurella multocida (strain Pm70), this protein is Fe/S biogenesis protein NfuA.